Here is a 1052-residue protein sequence, read N- to C-terminus: Kruppel-like factor 18 (1052 aa).

3 C2H2-type zinc fingers span residues 964 to 988 (YVCT…MRKH), 994 to 1018 (YVCD…KKRH), and 1024 to 1046 (YLCS…AKVH).

The protein belongs to the krueppel C2H2-type zinc-finger protein family.

The protein resides in the nucleus. The sequence is that of Kruppel-like factor 18 from Homo sapiens (Human).